A 114-amino-acid chain; its full sequence is MESTAHLRFLRMSPRKISTVAELIRGKPVEAALNILKFTKRAAAKPVEKLIKSAVANATDKSKGQVDVDTLYVKTISVDQGPTQRRFMPRAMGRATPIKKKTAHVHVVLAEAKK.

Belongs to the universal ribosomal protein uL22 family. As to quaternary structure, part of the 50S ribosomal subunit.

Functionally, this protein binds specifically to 23S rRNA; its binding is stimulated by other ribosomal proteins, e.g. L4, L17, and L20. It is important during the early stages of 50S assembly. It makes multiple contacts with different domains of the 23S rRNA in the assembled 50S subunit and ribosome. Its function is as follows. The globular domain of the protein is located near the polypeptide exit tunnel on the outside of the subunit, while an extended beta-hairpin is found that lines the wall of the exit tunnel in the center of the 70S ribosome. The polypeptide is Large ribosomal subunit protein uL22 (Myxococcus xanthus (strain DK1622)).